Consider the following 204-residue polypeptide: Inner membrane protein BB_0250 (204 aa).

The next 5 membrane-spanning stretches (helical) occupy residues 17 to 37 (IAYS…NVPI), 58 to 78 (ILIF…SFYI), 101 to 121 (YYYG…PFGV), 139 to 159 (FIVS…TLSF), and 172 to 192 (IKII…IIYV).

This sequence belongs to the DedA family.

The protein localises to the cell inner membrane. Required for proper cell division and envelope integrity. The protein is Inner membrane protein BB_0250 of Borreliella burgdorferi (strain ATCC 35210 / DSM 4680 / CIP 102532 / B31) (Borrelia burgdorferi).